The primary structure comprises 126 residues: Large ribosomal subunit protein eL28 (126 aa).

Serine 2 bears the N-acetylserine mark.

The protein belongs to the eukaryotic ribosomal protein eL28 family.

The chain is Large ribosomal subunit protein eL28 (rpl-28) from Caenorhabditis elegans.